Here is a 538-residue protein sequence, read N- to C-terminus: Putative cysteine ligase BshC (538 aa).

Residues 419–445 (IEAKRQIQAMEQLLAEKYSELASYLEE) are a coiled coil.

Belongs to the BshC family.

Involved in bacillithiol (BSH) biosynthesis. May catalyze the last step of the pathway, the addition of cysteine to glucosamine malate (GlcN-Mal) to generate BSH. The chain is Putative cysteine ligase BshC from Lysinibacillus sphaericus (strain C3-41).